A 100-amino-acid polypeptide reads, in one-letter code: Small ribosomal subunit protein uS14c (100 aa).

It belongs to the universal ribosomal protein uS14 family. Part of the 30S ribosomal subunit.

It is found in the plastid. It localises to the chloroplast. Binds 16S rRNA, required for the assembly of 30S particles. This is Small ribosomal subunit protein uS14c from Bigelowiella natans (Pedinomonas minutissima).